A 562-amino-acid polypeptide reads, in one-letter code: Probable malate:quinone oxidoreductase (562 aa).

This sequence belongs to the MQO family. The cofactor is FAD.

The enzyme catalyses (S)-malate + a quinone = a quinol + oxaloacetate. The protein operates within carbohydrate metabolism; tricarboxylic acid cycle; oxaloacetate from (S)-malate (quinone route): step 1/1. The protein is Probable malate:quinone oxidoreductase of Stenotrophomonas maltophilia (strain K279a).